Reading from the N-terminus, the 291-residue chain is ATP synthase gamma chain (291 aa).

Belongs to the ATPase gamma chain family. F-type ATPases have 2 components, CF(1) - the catalytic core - and CF(0) - the membrane proton channel. CF(1) has five subunits: alpha(3), beta(3), gamma(1), delta(1), epsilon(1). CF(0) has three main subunits: a, b and c.

It is found in the cell membrane. Its function is as follows. Produces ATP from ADP in the presence of a proton gradient across the membrane. The gamma chain is believed to be important in regulating ATPase activity and the flow of protons through the CF(0) complex. In Streptococcus equi subsp. zooepidemicus (strain MGCS10565), this protein is ATP synthase gamma chain.